The primary structure comprises 443 residues: Ribosomal protein uS12 methylthiotransferase RimO (443 aa).

The MTTase N-terminal domain maps to 8 to 118 (PKVGFVSLGC…VVNAVHEVVP (111 aa)). Positions 17, 53, 82, 151, 155, and 158 each coordinate [4Fe-4S] cluster. The Radical SAM core domain occupies 137 to 375 (LTPRHYAYLK…MAHQQAISAA (239 aa)). Positions 378–443 (QLRIGKEIDV…DEYDMWAEPI (66 aa)) constitute a TRAM domain.

It belongs to the methylthiotransferase family. RimO subfamily. [4Fe-4S] cluster is required as a cofactor.

The protein resides in the cytoplasm. The catalysed reaction is L-aspartate(89)-[ribosomal protein uS12]-hydrogen + (sulfur carrier)-SH + AH2 + 2 S-adenosyl-L-methionine = 3-methylsulfanyl-L-aspartate(89)-[ribosomal protein uS12]-hydrogen + (sulfur carrier)-H + 5'-deoxyadenosine + L-methionine + A + S-adenosyl-L-homocysteine + 2 H(+). In terms of biological role, catalyzes the methylthiolation of an aspartic acid residue of ribosomal protein uS12. In Pseudomonas putida (strain ATCC 700007 / DSM 6899 / JCM 31910 / BCRC 17059 / LMG 24140 / F1), this protein is Ribosomal protein uS12 methylthiotransferase RimO.